Reading from the N-terminus, the 277-residue chain is MAINLKLEQIPVVYILSDSIGETGEVVAKAAASQFDSGRVDIRRVPYLSSVREVEEALQEAESAGALVVYTLVRPDLKEYLEKRAHELSLPHVDIMGPMLEGLKQITKQNPKYQPGLIRKMDEAYFSKVEAIEFAVKYDDGKEPRGLLRADLVVIGVSRTSKTPLCMYLAHKGIKAANVPLVPEATPPEELFKIPPHKVVGLTIKPSILFEIRKERLKTLGLSQTADYANMERILMELDYALGIMKKIGCAVIDVSNKAVEETAARVLEIYRKGVGR.

An ADP-binding site is contributed by Gly156–Thr163.

It belongs to the pyruvate, phosphate/water dikinase regulatory protein family. PDRP subfamily.

The enzyme catalyses N(tele)-phospho-L-histidyl/L-threonyl-[pyruvate, phosphate dikinase] + ADP = N(tele)-phospho-L-histidyl/O-phospho-L-threonyl-[pyruvate, phosphate dikinase] + AMP + H(+). It catalyses the reaction N(tele)-phospho-L-histidyl/O-phospho-L-threonyl-[pyruvate, phosphate dikinase] + phosphate + H(+) = N(tele)-phospho-L-histidyl/L-threonyl-[pyruvate, phosphate dikinase] + diphosphate. Functionally, bifunctional serine/threonine kinase and phosphorylase involved in the regulation of the pyruvate, phosphate dikinase (PPDK) by catalyzing its phosphorylation/dephosphorylation. The sequence is that of Putative pyruvate, phosphate dikinase regulatory protein from Carboxydothermus hydrogenoformans (strain ATCC BAA-161 / DSM 6008 / Z-2901).